The sequence spans 658 residues: NUAK family SNF1-like kinase 1 (658 aa).

Methionine 1 is subject to N-acetylmethionine. Residues 1-53 (MEGAAVSAAGDGPAVETGLPGSPLEAVAGATAAPVEPRKPHGVKRHHHKHNLK) form a disordered region. Serine 22 carries the post-translational modification Phosphoserine. Over residues 40-53 (PHGVKRHHHKHNLK) the composition is skewed to basic residues. The 252-residue stretch at 56-307 (YELQETLGKG…IEDIANHWWV (252 aa)) folds into the Protein kinase domain. ATP-binding positions include 62 to 70 (LGKGTYGKV) and lysine 85. Aspartate 179 (proton acceptor) is an active-site residue. The residue at position 212 (threonine 212) is a Phosphothreonine; by LKB1. Disordered stretches follow at residues 353-422 (LAKP…EGIV) and 441-568 (IPLP…SYSR). Residues 378 to 393 (FPQSGQDSVPESPSKL) are compositionally biased toward polar residues. A compositionally biased stretch (basic residues) spans 394–405 (SSKRPKGILKKR). A GILK motif motif is present at residues 400 to 403 (GILK). At serine 456 the chain carries Phosphoserine. A compositionally biased stretch (basic residues) spans 519–530 (SCRRKGILKHSS). A compositionally biased stretch (low complexity) spans 559–568 (SDGISRSYSR). At serine 601 the chain carries Phosphoserine; by PKB/AKT1.

The protein belongs to the protein kinase superfamily. CAMK Ser/Thr protein kinase family. SNF1 subfamily. Interacts (via GILK motif) with PPP1CB; the interaction is direct and bridges NUAK1 and PPP1R12A. Interacts with CDKN1A. The cofactor is Mg(2+). Post-translationally, phosphorylated at Thr-212 by STK11/LKB1 in complex with STE20-related adapter-alpha (STRADA) pseudo kinase and CAB39. Not dephosphorylated by the myosin PP1 complex when regulating its activity, due to the presence of PPP1R12A, which prevents myosin PP1 from dephosphorylating NUAK1. Phosphorylated by STK38L upon stimulation with IGF1. Ubiquitinated with 'Lys-29'- and 'Lys-33'-linked polyubiquitins which appear to impede LKB1-mediated phosphorylation. Deubiquitinated by USP9X. Expressed in the developing central nervous system, in epidermis, and some other tissues.

The protein resides in the nucleus. The protein localises to the cytoplasm. The catalysed reaction is L-seryl-[protein] + ATP = O-phospho-L-seryl-[protein] + ADP + H(+). It catalyses the reaction L-threonyl-[protein] + ATP = O-phospho-L-threonyl-[protein] + ADP + H(+). Activated by phosphorylation on Thr-212. Activated by phosphorylation at Ser-601 AKT1 during glucose starvation; the relevance of such activation in normal cells is however unsure. Serine/threonine-protein kinase involved in various processes such as cell adhesion, regulation of cell ploidy and senescence, cell proliferation and tumor progression. Phosphorylates ATM, CASP6, LATS1, PPP1R12A and p53/TP53. Acts as a regulator of cellular senescence and cellular ploidy by mediating phosphorylation of 'Ser-464' of LATS1, thereby controlling its stability. Controls cell adhesion by regulating activity of the myosin protein phosphatase 1 (PP1) complex. Acts by mediating phosphorylation of PPP1R12A subunit of myosin PP1: phosphorylated PPP1R12A then interacts with 14-3-3, leading to reduced dephosphorylation of myosin MLC2 by myosin PP1. May be involved in DNA damage response: phosphorylates p53/TP53 at 'Ser-15' and 'Ser-392' and is recruited to the CDKN1A/WAF1 promoter to participate in transcription activation by p53/TP53. May also act as a tumor malignancy-associated factor by promoting tumor invasion and metastasis under regulation and phosphorylation by AKT1. Suppresses Fas-induced apoptosis by mediating phosphorylation of CASP6, thereby suppressing the activation of the caspase and the subsequent cleavage of CFLAR. Regulates UV radiation-induced DNA damage response mediated by CDKN1A. In association with STK11, phosphorylates CDKN1A in response to UV radiation and contributes to its degradation which is necessary for optimal DNA repair. The polypeptide is NUAK family SNF1-like kinase 1 (Nuak1) (Mus musculus (Mouse)).